The primary structure comprises 94 residues: Large ribosomal subunit protein bL28 (94 aa).

It belongs to the bacterial ribosomal protein bL28 family.

This chain is Large ribosomal subunit protein bL28, found in Maricaulis maris (strain MCS10) (Caulobacter maris).